Here is a 510-residue protein sequence, read N- to C-terminus: Kynurenine 3-monooxygenase (510 aa).

This sequence belongs to the aromatic-ring hydroxylase family. KMO subfamily. The cofactor is FAD.

The protein resides in the mitochondrion outer membrane. The enzyme catalyses L-kynurenine + NADPH + O2 + H(+) = 3-hydroxy-L-kynurenine + NADP(+) + H2O. Its pathway is cofactor biosynthesis; NAD(+) biosynthesis; quinolinate from L-kynurenine: step 1/3. Its function is as follows. Catalyzes the hydroxylation of L-kynurenine (L-Kyn) to form 3-hydroxy-L-kynurenine (L-3OHKyn). Required for synthesis of quinolinic acid. The chain is Kynurenine 3-monooxygenase (bna4) from Aspergillus oryzae (strain ATCC 42149 / RIB 40) (Yellow koji mold).